Consider the following 861-residue polypeptide: Translation initiation factor IF-2 (861 aa).

The disordered stretch occupies residues 107–272 (AQKQQDIQRA…QRKKKSKVVQ (166 aa)). Residues 115-128 (RAAEEAAAKERETE) show a composition bias toward basic and acidic residues. Polar residues-rich tracts occupy residues 148–158 (SVQQEAANMDT) and 169–180 (VDESVSATTAGG). The span at 210–228 (NKEDSEVRREPADAEDLKR) shows a compositional bias: basic and acidic residues. Positions 260–269 (RARQRKKKSK) are enriched in basic residues. The region spanning 362–531 (SRAPVVSVMG…LLQSEMLELT (170 aa)) is the tr-type G domain. The tract at residues 371–378 (GHVDHGKT) is G1. 371 to 378 (GHVDHGKT) provides a ligand contact to GTP. Residues 396 to 400 (GITQH) form a G2 region. Residues 417–420 (DTPG) form a G3 region. GTP contacts are provided by residues 417–421 (DTPGH) and 471–474 (NKMD). Residues 471–474 (NKMD) are G4. The interval 507–509 (SAH) is G5.

It belongs to the TRAFAC class translation factor GTPase superfamily. Classic translation factor GTPase family. IF-2 subfamily.

Its subcellular location is the cytoplasm. In terms of biological role, one of the essential components for the initiation of protein synthesis. Protects formylmethionyl-tRNA from spontaneous hydrolysis and promotes its binding to the 30S ribosomal subunits. Also involved in the hydrolysis of GTP during the formation of the 70S ribosomal complex. The sequence is that of Translation initiation factor IF-2 from Hahella chejuensis (strain KCTC 2396).